The chain runs to 347 residues: Melanoma-associated antigen B1 (347 aa).

Residues 1–17 (MPRGQKSKLRAREKRRK) show a composition bias toward basic residues. The tract at residues 1–104 (MPRGQKSKLR…QATTSTESSV (104 aa)) is disordered. Composition is skewed to polar residues over residues 39 to 53 (PSSS…TSSP) and 89 to 102 (ENAS…STES). The 200-residue stretch at 108–307 (VAWEAGMLMH…RDFPSHYEEA (200 aa)) folds into the MAGE domain. The interval 315 to 347 (AQVRSSVRARRRTTATTFRARSRAPFSRSSHPM) is disordered. The span at 328–347 (TATTFRARSRAPFSRSSHPM) shows a compositional bias: low complexity.

Expressed only in testis.

The sequence is that of Melanoma-associated antigen B1 (MAGEB1) from Homo sapiens (Human).